The following is a 153-amino-acid chain: ATP synthase subunit b' (153 aa).

The chain crosses the membrane as a helical span at residues 20–40; the sequence is TLPLMAVQVVLLTFILNALFF.

It belongs to the ATPase B chain family. As to quaternary structure, F-type ATPases have 2 components, F(1) - the catalytic core - and F(0) - the membrane proton channel. F(1) has five subunits: alpha(3), beta(3), gamma(1), delta(1), epsilon(1). F(0) has four main subunits: a(1), b(1), b'(1) and c(10-14). The alpha and beta chains form an alternating ring which encloses part of the gamma chain. F(1) is attached to F(0) by a central stalk formed by the gamma and epsilon chains, while a peripheral stalk is formed by the delta, b and b' chains.

It is found in the cellular thylakoid membrane. In terms of biological role, f(1)F(0) ATP synthase produces ATP from ADP in the presence of a proton or sodium gradient. F-type ATPases consist of two structural domains, F(1) containing the extramembraneous catalytic core and F(0) containing the membrane proton channel, linked together by a central stalk and a peripheral stalk. During catalysis, ATP synthesis in the catalytic domain of F(1) is coupled via a rotary mechanism of the central stalk subunits to proton translocation. Functionally, component of the F(0) channel, it forms part of the peripheral stalk, linking F(1) to F(0). The b'-subunit is a diverged and duplicated form of b found in plants and photosynthetic bacteria. The polypeptide is ATP synthase subunit b' (Prochlorococcus marinus (strain MIT 9211)).